Reading from the N-terminus, the 166-residue chain is Lipoprotein signal peptidase (166 aa).

4 helical membrane passes run 9–29, 45–65, 71–91, and 99–119; these read ASGALAPWLGISLIVILFDQL, ALTSFFNLVLVYNRGAAFGFL, WQRWAFTALGIGATLVICYLL, and LFSLSLALILGGALGNVIDRL. Active-site residues include D126 and D144. The chain crosses the membrane as a helical span at residues 135–155; it reads WHFPAFNLADSAITVGAVLLI.

It belongs to the peptidase A8 family.

The protein localises to the cell inner membrane. The catalysed reaction is Release of signal peptides from bacterial membrane prolipoproteins. Hydrolyzes -Xaa-Yaa-Zaa-|-(S,diacylglyceryl)Cys-, in which Xaa is hydrophobic (preferably Leu), and Yaa (Ala or Ser) and Zaa (Gly or Ala) have small, neutral side chains.. It participates in protein modification; lipoprotein biosynthesis (signal peptide cleavage). This protein specifically catalyzes the removal of signal peptides from prolipoproteins. This chain is Lipoprotein signal peptidase, found in Burkholderia vietnamiensis (strain G4 / LMG 22486) (Burkholderia cepacia (strain R1808)).